Consider the following 421-residue polypeptide: D-amino acid dehydrogenase (421 aa).

3–17 (VLVLGGGVVGVASAY) serves as a coordination point for FAD.

This sequence belongs to the DadA oxidoreductase family. The cofactor is FAD.

The catalysed reaction is a D-alpha-amino acid + A + H2O = a 2-oxocarboxylate + AH2 + NH4(+). It functions in the pathway amino-acid degradation; D-alanine degradation; NH(3) and pyruvate from D-alanine: step 1/1. Functionally, oxidative deamination of D-amino acids. This Methylobacterium nodulans (strain LMG 21967 / CNCM I-2342 / ORS 2060) protein is D-amino acid dehydrogenase.